Consider the following 31-residue polypeptide: Photosystem II reaction center protein T (31 aa).

Residues 3–23 (SFAYVLILTFAIATLFFAIAF) form a helical membrane-spanning segment.

It belongs to the PsbT family. In terms of assembly, PSII is composed of 1 copy each of membrane proteins PsbA, PsbB, PsbC, PsbD, PsbE, PsbF, PsbH, PsbI, PsbJ, PsbK, PsbL, PsbM, PsbT, PsbX, PsbY, PsbZ, Psb30/Ycf12, peripheral proteins PsbO, CyanoQ (PsbQ), PsbU, PsbV and a large number of cofactors. It forms dimeric complexes.

The protein resides in the cellular thylakoid membrane. Found at the monomer-monomer interface of the photosystem II (PS II) dimer, plays a role in assembly and dimerization of PSII. PSII is a light-driven water plastoquinone oxidoreductase, using light energy to abstract electrons from H(2)O, generating a proton gradient subsequently used for ATP formation. This is Photosystem II reaction center protein T from Synechococcus sp. (strain CC9902).